The primary structure comprises 87 residues: Acyl-CoA-binding protein (87 aa).

Position 2 is an N-acetylserine (serine 2). The ACB domain occupies 2 to 87 (SQAEFEKAAE…VEELKQKYGI (86 aa)). Lysine 8 is subject to N6-acetyllysine; alternate. Residue lysine 8 is modified to N6-succinyllysine; alternate. Position 14 (lysine 14) interacts with an acyl-CoA. Lysine 17 bears the N6-succinyllysine mark. Lysine 19 bears the N6-acetyllysine mark. Tyrosine 29 is modified (phosphotyrosine). Residues 29–33 (YSHYK), lysine 51, lysine 55, and tyrosine 74 each bind an acyl-CoA. An N6-acetyllysine modification is found at lysine 51. N6-acetyllysine; alternate is present on lysine 55. An N6-succinyllysine; alternate modification is found at lysine 55. Lysine 55 is modified (N6-(2-hydroxyisobutyryl)lysine; alternate). Residue lysine 55 is modified to N6-malonyllysine; alternate. Position 77 is an N6-acetyllysine; alternate (lysine 77). Lysine 77 carries the post-translational modification N6-succinyllysine; alternate.

This sequence belongs to the ACBP family. In terms of assembly, monomer.

The protein resides in the endoplasmic reticulum. It is found in the golgi apparatus. Binds medium- and long-chain acyl-CoA esters with very high affinity and may function as an intracellular carrier of acyl-CoA esters. It is also able to displace diazepam from the benzodiazepine (BZD) recognition site located on the GABA type A receptor. It is therefore possible that this protein also acts as a neuropeptide to modulate the action of the GABA receptor. The sequence is that of Acyl-CoA-binding protein (DBI) from Oryctolagus cuniculus (Rabbit).